Consider the following 154-residue polypeptide: uncharacterized protein (154 aa).

The chain crosses the membrane as a helical span at residues 23 to 43; the sequence is SAVALVTFAGAALSGVIPAIA.

It is found in the membrane. This is an uncharacterized protein from Mycobacterium tuberculosis (strain CDC 1551 / Oshkosh).